The chain runs to 326 residues: Elongation factor Ts (326 aa).

Residues 80-83 form an involved in Mg(2+) ion dislocation from EF-Tu region; sequence TDFV.

It belongs to the EF-Ts family.

It localises to the cytoplasm. Functionally, associates with the EF-Tu.GDP complex and induces the exchange of GDP to GTP. It remains bound to the aminoacyl-tRNA.EF-Tu.GTP complex up to the GTP hydrolysis stage on the ribosome. This chain is Elongation factor Ts, found in Rhodopirellula baltica (strain DSM 10527 / NCIMB 13988 / SH1).